The primary structure comprises 98 residues: NADH-ubiquinone oxidoreductase chain 4L (98 aa).

Transmembrane regions (helical) follow at residues 1 to 21, 29 to 49, and 59 to 79; these read MSLIHMNIIMAFTLSLVGLLM, ALLCMEGMMLSLFILATLTAL, and MPIILLVFAACEAAIGLALLV.

The protein belongs to the complex I subunit 4L family. As to quaternary structure, core subunit of respiratory chain NADH dehydrogenase (Complex I) which is composed of 45 different subunits.

It localises to the mitochondrion inner membrane. The catalysed reaction is a ubiquinone + NADH + 5 H(+)(in) = a ubiquinol + NAD(+) + 4 H(+)(out). Its function is as follows. Core subunit of the mitochondrial membrane respiratory chain NADH dehydrogenase (Complex I) which catalyzes electron transfer from NADH through the respiratory chain, using ubiquinone as an electron acceptor. Part of the enzyme membrane arm which is embedded in the lipid bilayer and involved in proton translocation. In Hyperoodon ampullatus (Northern bottlenose whale), this protein is NADH-ubiquinone oxidoreductase chain 4L (MT-ND4L).